Here is an 892-residue protein sequence, read N- to C-terminus: MSSLVCDCPHLESVGEVTKEELIKKSHGSCQDCRVRGPNLWACLENGCSYVGCGESHVDHSTLHSQDTKHCLTVNLTTLRVWCYTCSKEVFLDRKLSTQPTSAKLQDSHTQESKMSSSLTLKIPAAVVSENLDIELEEEDELKTRGLTGLKNIGNTCYMNAALQALSNCPPLTHYFLDCGGLARTDKKPALCKSYQKLMSDIWHKNRPGFVIPTNLFQGIKSVNPTFRGYSQQDAQEFLRCLMDVLHEELKEQIVEVEEDAQTGIVEENLDEDKSQSDNDFHSCDSGSSSDHAESESRKLSEELTESTMLIHEDQKDVESCKTWQKEKKFSNNLNQNHFLQDFEKNIQSTIEESECLKQETVKVQIQSKAADFTAEVNMNDLPTSQTPLLNEGATTHLSSSPPKPGAVWTGHKKVPGLCPAKKRKQKKYHSVIADIFDGTIVSSVQCLTCDRVSVTLETFQDLSLPIPGKEDLAKLHSSSHQSSLVKAGSCGEAYAPQGWIAFFLEYFKSWFWGPTVTLQDCLAAFFARDELKGDNMYSCEKCKKLRNGVKFCKVQKFPEILCIHLKRFRHELMFSTKIGTHVSFPLEGLDLQPFLAKDSPSQIVTYDLLSVICHHGTASSGHYIAYCRNNLNNLWYEFDDQSVTEVSEATVQNAEAYVLFYRKASEEAQKERRRVSCLLNIMEPSLLQFYISRQWLNKFKTFAEPGPISNNDFLCIHGGVPPRKASFIEDLVVMLPQNIWDYLYSRYGGGPAVNHLYVCYTCQTEMEKIEKRRKMELETFIRLNKAFQEEESPAVIYCISMQWFREWEGFVKSKDSDPPGPIDNTKIAAAKCGHITLRQGADSGQISEETWLFLQSIYGGGPEITLRQNVTLAESEGGHAEEKIDVETRNI.

The UBP-type zinc finger occupies 6–109 (CDCPHLESVG…PTSAKLQDSH (104 aa)). Zn(2+)-binding residues include C8, H10, C30, C33, C43, C48, C53, H60, H64, H70, C83, and C86. One can recognise a USP domain in the interval 148–665 (TGLKNIGNTC…EAYVLFYRKA (518 aa)). The active-site Nucleophile is the C157. The disordered stretch occupies residues 268–311 (ENLDEDKSQSDNDFHSCDSGSSSDHAESESRKLSEELTESTMLI). 2 stretches are compositionally biased toward basic and acidic residues: residues 272–283 (EDKSQSDNDFHS) and 291–302 (DHAESESRKLSE). The active-site Proton acceptor is H623. DUSP domains follow at residues 667–760 (EEAQ…LYVC) and 768–871 (EKIE…RQNV).

It belongs to the peptidase C19 family. USP20/USP33 subfamily.

Its subcellular location is the cytoplasm. It localises to the perinuclear region. The protein localises to the cytoskeleton. It is found in the microtubule organizing center. The protein resides in the centrosome. The catalysed reaction is Thiol-dependent hydrolysis of ester, thioester, amide, peptide and isopeptide bonds formed by the C-terminal Gly of ubiquitin (a 76-residue protein attached to proteins as an intracellular targeting signal).. Deubiquitinating enzyme involved in various processes such as centrosome duplication, cellular migration and beta-2 adrenergic receptor/ADRB2 recycling. Involved in regulation of centrosome duplication by mediating deubiquitination of ccp110 in S and G2/M phase, leading to stabilize ccp110 during the period which centrioles duplicate and elongate. Involved in cell migration via its interaction with intracellular domain of robo1, leading to regulate the Slit signaling. Plays a role in commissural axon guidance cross the ventral midline of the neural tube in a Slit-dependent manner, possibly by mediating the deubiquitination of robo1. Acts as a regulator of G-protein coupled receptor (GPCR) signaling by mediating the deubiquitination of beta-arrestins (arrb1 and arrb2) and beta-2 adrenergic receptor (adrb2). Deubiquitinates dio2, thereby regulating thyroid hormone regulation. Mediates deubiquitination of both 'Lys-48'- and 'Lys-63'-linked polyubiquitin chains. The chain is Ubiquitin carboxyl-terminal hydrolase 33 (usp33) from Xenopus tropicalis (Western clawed frog).